A 500-amino-acid chain; its full sequence is MAIFDNYEVWFVIGSQHLYGPETLRQVTQHAEHVVNALNTEAKLPCKLVLKPLGTTPDEITAICRDANYDDRCAGLVVWLHTFSPAKMWINGLTMLNKPLLQFHTQFNAALPWDSIDMDFMNLNQTAHGGREFGFIGARMRQQHAVVTGHWQDKQAHERIGSWMRQAVSKQDTRHLKVCRFGDNMREVAVTDGDKVAAQIKFGFSVNTRAVGDLVQVVNSISDGDVNALVDEYESCYTMTPATQIHGEKRQNVLEAARIELGMKRFLEQGGFHAFTTTFEDLHGLKQLPGLPVQRLMQQGYGFAGEGDWKTAALLRIMKVMSTGLQGGTSFMEDYTYHFEKGNDLVLGSHMLEVCPSIAVEEKPILDVQHLGIGGKDDPARLIFNTQTGPAIVASLIDLGDRYRLLVNCIDTVKTPHSLPKLPVANALWKAQPDLPTASEAWILAGGAHHTVFSHALNLNDMRQFAEMHDIEITVIDNDTRLPAFKDALRWNEVYYGFRR.

Mn(2+)-binding residues include Glu306, Glu333, His350, and His450.

Belongs to the arabinose isomerase family. Homohexamer. Requires Mn(2+) as cofactor.

The catalysed reaction is beta-L-arabinopyranose = L-ribulose. It participates in carbohydrate degradation; L-arabinose degradation via L-ribulose; D-xylulose 5-phosphate from L-arabinose (bacterial route): step 1/3. Functionally, catalyzes the conversion of L-arabinose to L-ribulose. The polypeptide is L-arabinose isomerase (Shigella flexneri serotype 5b (strain 8401)).